The chain runs to 403 residues: D-galactonate dehydratase family member Mmwyl1_0037 (403 aa).

Substrate-binding residues include N37 and H122. Y159 serves as the catalytic Proton donor/acceptor. D211 contacts Mg(2+). Residue H213 is the Proton donor/acceptor of the active site. Mg(2+)-binding residues include E237 and E263. E263, R284, H313, D317, and E340 together coordinate substrate.

This sequence belongs to the mandelate racemase/muconate lactonizing enzyme family. GalD subfamily. Mg(2+) is required as a cofactor.

It catalyses the reaction D-mannonate = 2-dehydro-3-deoxy-D-gluconate + H2O. Has low D-mannonate dehydratase activity (in vitro), suggesting that this is not a physiological substrate and that it has no significant role in D-mannonate degradation in vivo. Has no detectable activity with a panel of 70 other acid sugars (in vitro). The polypeptide is D-galactonate dehydratase family member Mmwyl1_0037 (Marinomonas sp. (strain MWYL1)).